A 446-amino-acid chain; its full sequence is Enolase 1 (446 aa).

Substrate contacts are provided by His164 and Glu173. Glu216 serves as the catalytic Proton donor. 3 residues coordinate Mg(2+): Asp251, Glu302, and Asp329. Residues Glu302 and Asp329 each coordinate substrate. Lys354 functions as the Proton acceptor in the catalytic mechanism. Substrate contacts are provided by residues 381 to 384 (SHRS) and Lys405.

The protein belongs to the enolase family. Homodimer. It depends on Mg(2+) as a cofactor.

It localises to the cytoplasm. It carries out the reaction (2R)-2-phosphoglycerate = phosphoenolpyruvate + H2O. It participates in carbohydrate degradation; glycolysis; pyruvate from D-glyceraldehyde 3-phosphate: step 4/5. The chain is Enolase 1 (ENO1) from Zea mays (Maize).